The sequence spans 1010 residues: Retinoblastoma-related protein 1 (1010 aa).

The segment at 1–23 is disordered; that stretch reads MEGAAPPASSGSEVTGAGSGKVD. Residues 419–619 are domain A; that stretch reads TPVSTAMTTA…EKGSSMYNSL (201 aa). Residues 419-861 form a pocket region; that stretch reads TPVSTAMTTA…NEVFIPTVKP (443 aa). Residues 620–730 are spacer; the sequence is IVARPTLSAE…PAAGGELCAE (111 aa). Positions 657 to 679 are disordered; sequence LPPLPFQKQEHSPDKDEVRSPKR. The span at 664 to 679 shows a compositional bias: basic and acidic residues; that stretch reads KQEHSPDKDEVRSPKR. The tract at residues 731 to 861 is domain B; sequence TGIGVFLSKI…NEVFIPTVKP (131 aa). The disordered stretch occupies residues 868–898; the sequence is SGTSPNKKNEEKCAADGPYPESPRLSRFPNL.

It belongs to the retinoblastoma protein (RB) family.

Its subcellular location is the nucleus. Regulator of biological processes that recruits a histone deacetylase to control gene transcription. May play a role in the entry into mitosis, negatively regulating the cell proliferation. Formation of stable complexes with geminiviridae replication-associated proteins may create a cellular environment which favors viral DNA replication. This is Retinoblastoma-related protein 1 (RBR1) from Oryza sativa subsp. indica (Rice).